The following is a 165-amino-acid chain: Deoxyuridine 5'-triphosphate nucleotidohydrolase (165 aa).

Residues 66-68 (RSG), N79, 83-85 (TVD), and K93 contribute to the substrate site. Positions 134 to 165 (ETSRGAGGHGSSGGHASLTPGARSAARVAQEG) are disordered.

It belongs to the dUTPase family. Requires Mg(2+) as cofactor.

It carries out the reaction dUTP + H2O = dUMP + diphosphate + H(+). It functions in the pathway pyrimidine metabolism; dUMP biosynthesis; dUMP from dCTP (dUTP route): step 2/2. Functionally, this enzyme is involved in nucleotide metabolism: it produces dUMP, the immediate precursor of thymidine nucleotides and it decreases the intracellular concentration of dUTP so that uracil cannot be incorporated into DNA. The protein is Deoxyuridine 5'-triphosphate nucleotidohydrolase of Nocardia farcinica (strain IFM 10152).